The sequence spans 280 residues: NAD-capped RNA hydrolase NudC (280 aa).

Substrate is bound at residue Arg-83. Zn(2+)-binding residues include Cys-113, Cys-116, Cys-131, and Cys-134. Tyr-139 lines the substrate pocket. The 129-residue stretch at 140-268 (PRVAPAIIVL…ASRRLLDDAL (129 aa)) folds into the Nudix hydrolase domain. Ala-177, Glu-193, and Glu-197 together coordinate a divalent metal cation. The Nudix box signature appears at 178 to 199 (GFVEPSETLEAAVHREVGEEVG). Position 211–218 (211–218 (QPWPFPHS)) interacts with substrate. Glu-238 contacts a divalent metal cation.

The protein belongs to the Nudix hydrolase family. NudC subfamily. As to quaternary structure, homodimer. Mg(2+) serves as cofactor. The cofactor is Mn(2+). Requires Zn(2+) as cofactor.

The catalysed reaction is a 5'-end NAD(+)-phospho-ribonucleoside in mRNA + H2O = a 5'-end phospho-adenosine-phospho-ribonucleoside in mRNA + beta-nicotinamide D-ribonucleotide + 2 H(+). The enzyme catalyses NAD(+) + H2O = beta-nicotinamide D-ribonucleotide + AMP + 2 H(+). It catalyses the reaction NADH + H2O = reduced beta-nicotinamide D-ribonucleotide + AMP + 2 H(+). Functionally, mRNA decapping enzyme that specifically removes the nicotinamide adenine dinucleotide (NAD) cap from a subset of mRNAs by hydrolyzing the diphosphate linkage to produce nicotinamide mononucleotide (NMN) and 5' monophosphate mRNA. The NAD-cap is present at the 5'-end of some mRNAs and stabilizes RNA against 5'-processing. Has preference for mRNAs with a 5'-end purine. Catalyzes the hydrolysis of a broad range of dinucleotide pyrophosphates. This Deinococcus radiodurans (strain ATCC 13939 / DSM 20539 / JCM 16871 / CCUG 27074 / LMG 4051 / NBRC 15346 / NCIMB 9279 / VKM B-1422 / R1) protein is NAD-capped RNA hydrolase NudC.